The sequence spans 533 residues: Phosphoenolpyruvate carboxykinase (ATP) (533 aa).

Residues R59, Y199, and K205 each contribute to the substrate site. Residues K205, H224, and 240 to 248 contribute to the ATP site; that span reads GLSGTGKTT. Mn(2+) is bound by residues K205 and H224. Position 261 (D261) interacts with Mn(2+). ATP-binding positions include E289, R325, 441-442, and T447; that span reads RI. R325 is a substrate binding site.

This sequence belongs to the phosphoenolpyruvate carboxykinase (ATP) family. In terms of assembly, monomer. Mn(2+) serves as cofactor.

The protein resides in the cytoplasm. It carries out the reaction oxaloacetate + ATP = phosphoenolpyruvate + ADP + CO2. The protein operates within carbohydrate biosynthesis; gluconeogenesis. Functionally, involved in the gluconeogenesis. Catalyzes the conversion of oxaloacetate (OAA) to phosphoenolpyruvate (PEP) through direct phosphoryl transfer between the nucleoside triphosphate and OAA. This Idiomarina loihiensis (strain ATCC BAA-735 / DSM 15497 / L2-TR) protein is Phosphoenolpyruvate carboxykinase (ATP).